A 1313-amino-acid chain; its full sequence is MSNYSCPRTHNKSNMSGRNEVKPISFSRGSFQIHHYSNSIHSPSLDGSPRQNFSQKYSFGSINSSNSSYDRSRDPSSVEQQLMREKSQALLKRKSSPMPKSSGLLYSTHTNKELSSIDKINDPSSNALICAGKAHLGYYKFSSNDNNKITLVHEFTQGFSSGSSQLNSLNPNLNKRRRQIKLSTIADVKSGFQKYNNYIAVCNNSTIISIYDINKNDNIDNPLVTSFSEHSRAVNSFDFNMTQTSLLISGGQDGQIKIWDLRSNSLSGSNKPDLNINAASDSIRDVKWMPGYNFSSFNQSYDGKQTGNSEYKFASIHDSGLLLKFDIRQPNQVEKKINAHTGPGLCLNWHPNQDYIATGGRDGKCCIWYIGDVVNDAPVTSLGSMTPNTLHTSNVNYYQSNATSLALPEMTINTGFPVTKLKFRPAYEKNVMDSLLAISSMGEEAEVNIYSLCRKFIPKHVLLTTSPSQGLVWWDKSLIFNTDRSNRINGWDIDLEPTVLDNLPKALATWRDIDGNGLLVIDQDSGTYTANEEYIPLVFDKRRRQSHRLLNPSINDNNSITKTKYLDSIKKANSNTIISPTSVEKTGNIKQPNLHSNKSIIGMTSPMYMTQFMPPTNSPSPLNEPLEFKGIQSPLIVALDFPHILNNMRLSKITSKKHLSKSSDIAAIKESPIQVFQYLARELEFSFSKDRKLDSRSSIIKRKSISDDSGSQVDVIKKIGFTDTTKWTNLINRKTDGEIAEKSSDRISALSTSSESIKNDIDEKSEHSKNNAYLNLEKKLSHGTHGMPEDAIEAQHKVDILIELVTICSHNASVYSYIDDVPNFKIWTLIKDSLLWDLKDITGIEEAINSNDSIEIKDKFQYFENLDHERALKNSSSQTQFSDIPSEIESFVTENPEALTSASLELDNDIEEGTKESKRPISNLQQQLKAENTAVMDTPSDVFVTATTDGGHFRDNSKVTRDENKIETNDNTNLLNIGKVNTENAIKIDSESVIEDVAPGSKSIEIPTLTRGRTRTSFIDTFMTNPLHNMERPDRSLLLAQDSAASLNDQSSPISKVSSIKSSSNVPHSLNSMIKLSQGKMHSRTRSIGKSPIKLSGFLSPKERSLSLPLENILKKNKSAEKVAHNDQFRPPWETGKLLKQLFNQAVETGNILLAINIITLFQDLYNITTIDVVKSSLLQFVEILHRYELFEIATALLKYCSWNNILEGNGGNSTVQLFCDKCGKLIVNEFSKTNFNEELKRTGNKDSMKKFGYWYCDACKKPNSLCVLCEKPMKKLVMCVLACGHEGHFQCLRDWFLNEGMNECPAGDIQVI.

The segment covering 1 to 17 has biased composition (polar residues); sequence MSNYSCPRTHNKSNMSG. Disordered regions lie at residues 1 to 22 and 38 to 83; these read MSNY…NEVK and NSIH…QQLM. Residues 57–69 are compositionally biased toward low complexity; it reads YSFGSINSSNSSY. Residues 70-83 are compositionally biased toward basic and acidic residues; sequence DRSRDPSSVEQQLM. WD repeat units lie at residues 180 to 221, 229 to 269, 339 to 378, 442 to 484, 711 to 752, 795 to 837, 1100 to 1143, and 1190 to 1229; these read IKLS…NIDN, EHSR…LSGS, AHTG…NDAP, GEEA…NTDR, SQVD…ALST, QHKV…LLWD, SPKE…KQLF, and LFEI…LIVN. The segment at 1267-1309 adopts an RING-type; degenerate zinc-finger fold; that stretch reads CVLCEKPMKKLVMCVLACGHEGHFQCLRDWFLNEGMNECPAGD.

This sequence belongs to the WD repeat RTC1 family.

The protein resides in the vacuole. Functionally, may be involved in a process influencing telomere capping. The protein is Restriction of telomere capping protein 1 (RTC1) of Vanderwaltozyma polyspora (strain ATCC 22028 / DSM 70294 / BCRC 21397 / CBS 2163 / NBRC 10782 / NRRL Y-8283 / UCD 57-17) (Kluyveromyces polysporus).